The sequence spans 845 residues: Protein TSD2 (845 aa).

The tract at residues 193 to 283 (DVDSDSESDS…SASATRLTNA (91 aa)) is disordered. Basic and acidic residues-rich tracts occupy residues 202–212 (SDSHSDSHSDS) and 230–242 (ARSH…DGSG). Residues 243–272 (GKRKRGSHSPLSRRRQRHKQGQRHKPRHRS) are compositionally biased toward basic residues.

Belongs to the CDC45 family.

Its subcellular location is the nucleus. Its function is as follows. Temperature-sensitive protein required for DNA synthesis. May be a transcription factor that regulates the level or influences the stability of DNA polymerases or auxiliary proteins. This chain is Protein TSD2 (TSD2), found in Mycosarcoma maydis (Corn smut fungus).